We begin with the raw amino-acid sequence, 207 residues long: Protein GET1 (207 aa).

Residues 1–4 (MPSL) lie on the Lumenal side of the membrane. The chain crosses the membrane as a helical span at residues 5–24 (LISVLFLHIAIYIINTIAAS). Over 25–110 (TIDSLLWLIY…FFDVAVKALR (86 aa)) the chain is Cytoplasmic. Residues 44–97 (IAREQHQMKLEVVQLKREMNATSSQDEFAKWAKLRRRHDKALEEYEVKNKQFSR) are a coiled coil. The chain crosses the membrane as a helical span at residues 111–131 (WAGTSGLIVFLQFWFSKTPIF). The Lumenal portion of the chain corresponds to 132-155 (TLPPSWIPWQVEWVLSFPRAPMGT). Residues 156 to 172 (VSIQVWGGACAVVVALI) form a helical membrane-spanning segment. Topologically, residues 173–207 (GEAIGATVRYLYASKDSMEAIKVGAGAVEKEKKRQ) are cytoplasmic.

Belongs to the WRB/GET1 family. Interacts with GET3.

It is found in the endoplasmic reticulum membrane. Its function is as follows. Required for the post-translational delivery of tail-anchored (TA) proteins to the endoplasmic reticulum. Acts as a membrane receptor for soluble GET3, which recognizes and selectively binds the transmembrane domain of TA proteins in the cytosol. This chain is Protein GET1, found in Paracoccidioides brasiliensis (strain Pb18).